A 95-amino-acid polypeptide reads, in one-letter code: Cell division topological specificity factor (95 aa).

It belongs to the MinE family.

Functionally, prevents the cell division inhibition by proteins MinC and MinD at internal division sites while permitting inhibition at polar sites. This ensures cell division at the proper site by restricting the formation of a division septum at the midpoint of the long axis of the cell. This chain is Cell division topological specificity factor, found in Microcystis aeruginosa (strain NIES-843 / IAM M-2473).